The following is a 708-amino-acid chain: ATP-dependent DNA helicase Hel308 (708 aa).

The short motif at 1–29 (MSIDDLKLPSNVIDIIKNRGIKKLNPPQT) is the Q motif element. ATP contacts are provided by residues Q28 and 46-53 (SPTGSGKT). In terms of domain architecture, Helicase ATP-binding spans 33–196 (KKGLLDGNRL…WLGAEPVATN (164 aa)). The DEAH box motif lies at 145-148 (DELH). Residues 229–435 (HGDDAIIAYT…ERAFYTFLLG (207 aa)) enclose the Helicase C-terminal domain.

It belongs to the helicase family. Hel308 subfamily. In terms of assembly, monomer.

It catalyses the reaction Couples ATP hydrolysis with the unwinding of duplex DNA by translocating in the 3'-5' direction.. The catalysed reaction is ATP + H2O = ADP + phosphate + H(+). Its function is as follows. DNA-dependent ATPase and 3'-5' DNA helicase that may be involved in repair of stalled replication forks. This chain is ATP-dependent DNA helicase Hel308, found in Saccharolobus solfataricus (strain ATCC 35092 / DSM 1617 / JCM 11322 / P2) (Sulfolobus solfataricus).